A 231-amino-acid polypeptide reads, in one-letter code: Cilia- and flagella-associated protein 299 (231 aa).

It localises to the cytoplasm. It is found in the nucleus. May be involved in spermatogenesis. The chain is Cilia- and flagella-associated protein 299 from Bos taurus (Bovine).